Reading from the N-terminus, the 517-residue chain is Golgi-associated kinase 1B (517 aa).

Over 1-36 (MTCPDKPGQLVNWFVCSLCAPRVCKLWSSRRPRTRR) the chain is Cytoplasmic. Residues 37–56 (NLLLGTACAIYLGFLVSQVG) form a helical; Signal-anchor for type II membrane protein membrane-spanning segment. Residues 57-517 (RGSFQHGQAT…HGARVLPMNE (461 aa)) lie on the Extracellular side of the membrane. 2 N-linked (GlcNAc...) asparagine glycosylation sites follow: Asn98 and Asn287.

This sequence belongs to the GASK family.

Its subcellular location is the golgi apparatus membrane. This is Golgi-associated kinase 1B from Mus musculus (Mouse).